The following is a 324-amino-acid chain: tRNA N6-adenosine threonylcarbamoyltransferase (324 aa).

Fe cation-binding residues include histidine 107, histidine 111, and tyrosine 127. Substrate contacts are provided by residues tyrosine 127–glycine 131, aspartate 159, glycine 172, glutamate 176, and asparagine 257. Aspartate 285 serves as a coordination point for Fe cation.

It belongs to the KAE1 / TsaD family. Monomer. Component of the KEOPS complex that consists of Kae1, Bud32, Cgi121 and Pcc1; the whole complex dimerizes. Fe(2+) serves as cofactor.

The protein resides in the cytoplasm. It carries out the reaction L-threonylcarbamoyladenylate + adenosine(37) in tRNA = N(6)-L-threonylcarbamoyladenosine(37) in tRNA + AMP + H(+). Functionally, required for the formation of a threonylcarbamoyl group on adenosine at position 37 (t(6)A37) in tRNAs that read codons beginning with adenine. Is a component of the KEOPS complex that is probably involved in the transfer of the threonylcarbamoyl moiety of threonylcarbamoyl-AMP (TC-AMP) to the N6 group of A37. Kae1 likely plays a direct catalytic role in this reaction, but requires other protein(s) of the complex to fulfill this activity. The chain is tRNA N6-adenosine threonylcarbamoyltransferase from Pyrococcus furiosus (strain ATCC 43587 / DSM 3638 / JCM 8422 / Vc1).